Reading from the N-terminus, the 358-residue chain is 3-isopropylmalate dehydrogenase (358 aa).

An NAD(+)-binding site is contributed by 77 to 90 (GPKWDNLPIDQRPE). Residues arginine 98, arginine 108, arginine 137, and aspartate 221 each contribute to the substrate site. Mg(2+)-binding residues include aspartate 221, aspartate 245, and aspartate 249. 279-291 (GSAPDIAHLNIAN) is an NAD(+) binding site.

The protein belongs to the isocitrate and isopropylmalate dehydrogenases family. LeuB type 1 subfamily. Homodimer. Mg(2+) is required as a cofactor. Mn(2+) serves as cofactor.

The protein localises to the cytoplasm. It carries out the reaction (2R,3S)-3-isopropylmalate + NAD(+) = 4-methyl-2-oxopentanoate + CO2 + NADH. The protein operates within amino-acid biosynthesis; L-leucine biosynthesis; L-leucine from 3-methyl-2-oxobutanoate: step 3/4. Functionally, catalyzes the oxidation of 3-carboxy-2-hydroxy-4-methylpentanoate (3-isopropylmalate) to 3-carboxy-4-methyl-2-oxopentanoate. The product decarboxylates to 4-methyl-2 oxopentanoate. This Campylobacter jejuni (strain RM1221) protein is 3-isopropylmalate dehydrogenase.